We begin with the raw amino-acid sequence, 382 residues long: Porphobilinogen deaminase, chloroplastic (382 aa).

A chloroplast-targeting transit peptide spans 1–62; that stretch reads MDIASSSLSQ…KQSSSGFVKA (62 aa). The dipyrromethane site is built by Arg-80 and Ser-82. Ser-123 is modified (phosphoserine). Dipyrromethane is bound by residues 156–157, 200–206, and 223–229; these read KD, TASLRRK, and RGNVQTR. Asp-157 functions as the Proton donor/acceptor in the catalytic mechanism. Cys-316 is modified (S-(dipyrrolylmethanemethyl)cysteine).

Belongs to the HMBS family. As to quaternary structure, monomer. Dipyrromethane is required as a cofactor.

The protein resides in the plastid. It localises to the chloroplast. It catalyses the reaction 4 porphobilinogen + H2O = hydroxymethylbilane + 4 NH4(+). The protein operates within porphyrin-containing compound metabolism; protoporphyrin-IX biosynthesis; coproporphyrinogen-III from 5-aminolevulinate: step 2/4. It functions in the pathway porphyrin-containing compound metabolism; chlorophyll biosynthesis. Inhibited by NH(3), heavy-metal ions, hydroxylamine and 2-bromoporphobilinogen. Not inhibited by N-ethylmaleimide. Functionally, tetrapolymerization of the monopyrrole PBG into the hydroxymethylbilane pre-uroporphyrinogen in several discrete steps. The protein is Porphobilinogen deaminase, chloroplastic (HEMC) of Arabidopsis thaliana (Mouse-ear cress).